The primary structure comprises 98 residues: MQVLVRDNNVDQALKALKKKMQREGIFREMKLRGHYEKPSEKKAREKAEAVRRARKLARKKLQREGLLPMKPKPVFGAGAGGERGGRGGPGAGPRGPR.

The interval 61 to 98 (KLQREGLLPMKPKPVFGAGAGGERGGRGGPGAGPRGPR) is disordered. Residues 78–98 (AGAGGERGGRGGPGAGPRGPR) are compositionally biased toward gly residues.

This sequence belongs to the bacterial ribosomal protein bS21 family.

The polypeptide is Small ribosomal subunit protein bS21B (Bradyrhizobium diazoefficiens (strain JCM 10833 / BCRC 13528 / IAM 13628 / NBRC 14792 / USDA 110)).